Reading from the N-terminus, the 238-residue chain is ATP synthase subunit a (238 aa).

Transmembrane regions (helical) follow at residues 17 to 37 (LSNI…AIIC), 80 to 100 (ITLL…QIAI), 112 to 132 (DPIV…YYGI), and 194 to 214 (IFVG…SIFI).

This sequence belongs to the ATPase A chain family. In terms of assembly, F-type ATPases have 2 components, CF(1) - the catalytic core - and CF(0) - the membrane proton channel. CF(1) has five subunits: alpha(3), beta(3), gamma(1), delta(1), epsilon(1). CF(0) has three main subunits: a(1), b(2) and c(9-12). The alpha and beta chains form an alternating ring which encloses part of the gamma chain. CF(1) is attached to CF(0) by a central stalk formed by the gamma and epsilon chains, while a peripheral stalk is formed by the delta and b chains.

Its subcellular location is the cell membrane. Key component of the proton channel; it plays a direct role in the translocation of protons across the membrane. This is ATP synthase subunit a from Listeria innocua serovar 6a (strain ATCC BAA-680 / CLIP 11262).